A 322-amino-acid polypeptide reads, in one-letter code: UDP-N-acetylenolpyruvoylglucosamine reductase (322 aa).

Residues 36-202 form the FAD-binding PCMH-type domain; sequence RAGGPAQVLF…TSVLFEGVPG (167 aa). Residue Arg182 is part of the active site. Ser231 functions as the Proton donor in the catalytic mechanism. The active site involves Glu301.

Belongs to the MurB family. It depends on FAD as a cofactor.

The protein localises to the cytoplasm. It catalyses the reaction UDP-N-acetyl-alpha-D-muramate + NADP(+) = UDP-N-acetyl-3-O-(1-carboxyvinyl)-alpha-D-glucosamine + NADPH + H(+). Its pathway is cell wall biogenesis; peptidoglycan biosynthesis. In terms of biological role, cell wall formation. The chain is UDP-N-acetylenolpyruvoylglucosamine reductase from Brucella abortus (strain S19).